Here is a 143-residue protein sequence, read N- to C-terminus: SsrA-binding protein (143 aa).

It belongs to the SmpB family.

The protein localises to the cytoplasm. Required for rescue of stalled ribosomes mediated by trans-translation. Binds to transfer-messenger RNA (tmRNA), required for stable association of tmRNA with ribosomes. tmRNA and SmpB together mimic tRNA shape, replacing the anticodon stem-loop with SmpB. tmRNA is encoded by the ssrA gene; the 2 termini fold to resemble tRNA(Ala) and it encodes a 'tag peptide', a short internal open reading frame. During trans-translation Ala-aminoacylated tmRNA acts like a tRNA, entering the A-site of stalled ribosomes, displacing the stalled mRNA. The ribosome then switches to translate the ORF on the tmRNA; the nascent peptide is terminated with the 'tag peptide' encoded by the tmRNA and targeted for degradation. The ribosome is freed to recommence translation, which seems to be the essential function of trans-translation. The sequence is that of SsrA-binding protein from Mycoplasmoides gallisepticum (strain R(low / passage 15 / clone 2)) (Mycoplasma gallisepticum).